The sequence spans 521 residues: 4-cresol dehydrogenase [hydroxylating] flavoprotein subunit (521 aa).

In terms of domain architecture, FAD-binding PCMH-type spans 54–268 (AAHAPSAAVT…VEIVDALRPL (215 aa)). Tyr-384 is modified (O-8alpha-FAD tyrosine).

Tetramer of two cytochrome subunits and two flavoprotein subunits. FAD serves as cofactor.

It carries out the reaction 4-methylphenol + 4 oxidized [azurin] + H2O = 4 reduced [azurin] + 4-hydroxybenzaldehyde + 4 H(+). It participates in aromatic compound metabolism; p-cresol degradation. Functionally, catalyzes the azurin dependent hydroxylation of the methyl group of 4-methylphenol to form 4-hydroxybenzaldehyde. The protein is 4-cresol dehydrogenase [hydroxylating] flavoprotein subunit (pchF) of Pseudomonas putida (Arthrobacter siderocapsulatus).